We begin with the raw amino-acid sequence, 254 residues long: Emerin (254 aa).

Methionine 1 is subject to N-acetylmethionine. In terms of domain architecture, LEM spans 1 to 45 (MDNYADLSDTELTTLLRRYNIPHGPVVGSTRRLYEKKIFEYETQR). Phosphoserine is present on residues serine 8 and serine 29. The interval 46–222 (RRLSPPSSSA…PGAGLGQDRQ (177 aa)) is interaction with F-actin. Serine 49 bears the Phosphoserine; by PKA mark. 7 positions are modified to phosphoserine: serine 54, serine 60, serine 87, serine 98, serine 141, serine 142, and serine 143. Position 161 is a phosphotyrosine (tyrosine 161). Residues 168–186 (RPVSASRSSLDLSYYPTSS) are interaction with CTNNB1. Phosphoserine occurs at positions 171, 173, and 175. The helical transmembrane segment at 223–243 (VPLWGQLLLFLVFVIVLFFIY) threads the bilayer.

In terms of assembly, interacts with lamins A and C, BANF1, GMCL, BCLAF1 and YTHDC1/YT521. Interacts with TMEM43; the interaction retains emerin in the nuclear inner membrane. Interacts with SUN1 and SUN2. Interacts with ACTB, SPTAN1, F-actin, CTNNB1 and beta-tubulin. Interacts with TMEM201. Interacts with NEMP1. Found in four different phosphorylated forms, three of which appear to be associated with the cell cycle. In terms of tissue distribution, skeletal muscle, heart, colon, testis, ovary and pancreas.

It is found in the nucleus inner membrane. It localises to the nucleus outer membrane. Its function is as follows. Stabilizes and promotes the formation of a nuclear actin cortical network. Stimulates actin polymerization in vitro by binding and stabilizing the pointed end of growing filaments. Inhibits beta-catenin activity by preventing its accumulation in the nucleus. Acts by influencing the nuclear accumulation of beta-catenin through a CRM1-dependent export pathway. Links centrosomes to the nuclear envelope via a microtubule association. Required for proper localization of non-farnesylated prelamin-A/C. Together with NEMP1, contributes to nuclear envelope stiffness in germ cells. EMD and BAF are cooperative cofactors of HIV-1 infection. Association of EMD with the viral DNA requires the presence of BAF and viral integrase. The association of viral DNA with chromatin requires the presence of BAF and EMD. This Homo sapiens (Human) protein is Emerin (EMD).